The following is a 266-amino-acid chain: Norfluorocurarine synthase 1 (266 aa).

The region spanning H11 to S121 is the AB hydrolase-1 domain. Active-site residues include S86, D216, and H244.

The protein belongs to the AB hydrolase superfamily. In terms of assembly, homodimer.

The enzyme catalyses 17-dehydropreakuammicine + H2O = norfluorocurarine + methanol + CO2. The protein operates within alkaloid biosynthesis. Hydrolase involved in the biosynthesis of curare monoterpene indole alkaloids (MIAs), natural products such as diaboline, a pharmacologically active compound used to regulate blood pressure. Curare alkaloids act as animal glycine receptor antagonists. Catalyzes the conversion of dehydropreakuammicine to norfluorocurarine. The polypeptide is Norfluorocurarine synthase 1 (Strychnos sp).